A 502-amino-acid polypeptide reads, in one-letter code: Glycerol kinase (502 aa).

ADP is bound at residue T13. ATP-binding residues include T13, T14, and S15. Position 13 (T13) interacts with sn-glycerol 3-phosphate. Residue R17 participates in ADP binding. Residues R83, E84, Y136, and D246 each coordinate sn-glycerol 3-phosphate. Glycerol is bound by residues R83, E84, Y136, D246, and Q247. The ADP site is built by T268 and G311. The ATP site is built by T268, G311, Q315, and G412. Residues G412 and N416 each coordinate ADP.

It belongs to the FGGY kinase family.

The catalysed reaction is glycerol + ATP = sn-glycerol 3-phosphate + ADP + H(+). It functions in the pathway polyol metabolism; glycerol degradation via glycerol kinase pathway; sn-glycerol 3-phosphate from glycerol: step 1/1. Inhibited by fructose 1,6-bisphosphate (FBP). Its function is as follows. Key enzyme in the regulation of glycerol uptake and metabolism. Catalyzes the phosphorylation of glycerol to yield sn-glycerol 3-phosphate. This Francisella tularensis subsp. holarctica (strain FTNF002-00 / FTA) protein is Glycerol kinase.